The chain runs to 303 residues: Aspartate carbamoyltransferase catalytic subunit (303 aa).

Arg51 and Thr52 together coordinate carbamoyl phosphate. Residue Lys80 coordinates L-aspartate. Carbamoyl phosphate is bound by residues Arg101, His129, and Gln132. L-aspartate is bound by residues Arg162 and Arg221. Residues Leu260 and Pro261 each coordinate carbamoyl phosphate.

The protein belongs to the aspartate/ornithine carbamoyltransferase superfamily. ATCase family. As to quaternary structure, heterooligomer of catalytic and regulatory chains.

It carries out the reaction carbamoyl phosphate + L-aspartate = N-carbamoyl-L-aspartate + phosphate + H(+). It functions in the pathway pyrimidine metabolism; UMP biosynthesis via de novo pathway; (S)-dihydroorotate from bicarbonate: step 2/3. Catalyzes the condensation of carbamoyl phosphate and aspartate to form carbamoyl aspartate and inorganic phosphate, the committed step in the de novo pyrimidine nucleotide biosynthesis pathway. This Saccharolobus solfataricus (strain ATCC 35092 / DSM 1617 / JCM 11322 / P2) (Sulfolobus solfataricus) protein is Aspartate carbamoyltransferase catalytic subunit.